The sequence spans 382 residues: Histidinol-phosphate aminotransferase (382 aa).

A disordered region spans residues 1–28 (MTSAPRPRPTLDDLPLREDLRGKSPYGA). The segment covering 9 to 22 (PTLDDLPLREDLRG) has biased composition (basic and acidic residues). Lysine 233 is subject to N6-(pyridoxal phosphate)lysine.

This sequence belongs to the class-II pyridoxal-phosphate-dependent aminotransferase family. Histidinol-phosphate aminotransferase subfamily. Homodimer. Pyridoxal 5'-phosphate is required as a cofactor.

The enzyme catalyses L-histidinol phosphate + 2-oxoglutarate = 3-(imidazol-4-yl)-2-oxopropyl phosphate + L-glutamate. It functions in the pathway amino-acid biosynthesis; L-histidine biosynthesis; L-histidine from 5-phospho-alpha-D-ribose 1-diphosphate: step 7/9. The protein is Histidinol-phosphate aminotransferase of Mycobacterium marinum (strain ATCC BAA-535 / M).